Reading from the N-terminus, the 162-residue chain is Ribosomal RNA large subunit methyltransferase H (162 aa).

Residue Gly108 coordinates S-adenosyl-L-methionine.

This sequence belongs to the RNA methyltransferase RlmH family. As to quaternary structure, homodimer.

Its subcellular location is the cytoplasm. It catalyses the reaction pseudouridine(1915) in 23S rRNA + S-adenosyl-L-methionine = N(3)-methylpseudouridine(1915) in 23S rRNA + S-adenosyl-L-homocysteine + H(+). Its function is as follows. Specifically methylates the pseudouridine at position 1915 (m3Psi1915) in 23S rRNA. The sequence is that of Ribosomal RNA large subunit methyltransferase H from Methylobacterium nodulans (strain LMG 21967 / CNCM I-2342 / ORS 2060).